The chain runs to 141 residues: Protein NrdI (141 aa).

The protein belongs to the NrdI family.

Its function is as follows. Probably involved in ribonucleotide reductase function. The chain is Protein NrdI from Bifidobacterium animalis subsp. lactis (strain AD011).